A 448-amino-acid chain; its full sequence is N-succinylarginine dihydrolase (448 aa).

Substrate-binding positions include 19–28, asparagine 110, and 137–138; these read GGLSYGNVAS and HR. Glutamate 174 is a catalytic residue. Substrate is bound at residue arginine 214. Histidine 250 is an active-site residue. Aspartate 252 and asparagine 365 together coordinate substrate. The active-site Nucleophile is the cysteine 371.

This sequence belongs to the succinylarginine dihydrolase family. As to quaternary structure, homodimer.

It catalyses the reaction N(2)-succinyl-L-arginine + 2 H2O + 2 H(+) = N(2)-succinyl-L-ornithine + 2 NH4(+) + CO2. It functions in the pathway amino-acid degradation; L-arginine degradation via AST pathway; L-glutamate and succinate from L-arginine: step 2/5. Functionally, catalyzes the hydrolysis of N(2)-succinylarginine into N(2)-succinylornithine, ammonia and CO(2). The protein is N-succinylarginine dihydrolase of Pseudomonas syringae pv. syringae (strain B728a).